Reading from the N-terminus, the 256-residue chain is Chlorophyll a-b binding protein CP24 10A, chloroplastic (256 aa).

A run of 2 helical transmembrane segments spans residues 106-126 (WAMAAVLGIFVGQAWSGIPWF) and 134-154 (AIAPFSFGTLLGTQLILMGWV).

This sequence belongs to the ELIP/psbS family.

It is found in the plastid. The protein localises to the chloroplast thylakoid membrane. The sequence is that of Chlorophyll a-b binding protein CP24 10A, chloroplastic (CAP10A) from Solanum lycopersicum (Tomato).